The primary structure comprises 250 residues: Proteasome subunit alpha type-7-like (250 aa).

An O-linked (GlcNAc) serine glycan is attached at S132.

The protein belongs to the peptidase T1A family. The 26S proteasome consists of a 20S proteasome core and two 19S regulatory subunits. The 20S proteasome core is a barrel-shaped complex made of 28 subunits that are arranged in four stacked rings. The two outer rings are each formed by seven alpha subunits, and the two inner rings are formed by seven beta subunits. The proteolytic activity is exerted by three beta-subunits PSMB5, PSMB6 and PSMB7. PSMA7 interacts directly with the PSMG1-PSMG2 heterodimer which promotes 20S proteasome assembly. Interacts with HIF1A. Interacts with RAB7A. Interacts with PRKN. Interacts with ABL1 and ABL2. Interacts with EMAP2. Interacts with MAVS.

It localises to the cytoplasm. Its subcellular location is the nucleus. Component of the 20S core proteasome complex involved in the proteolytic degradation of most intracellular proteins. This complex plays numerous essential roles within the cell by associating with different regulatory particles. Associated with two 19S regulatory particles, forms the 26S proteasome and thus participates in the ATP-dependent degradation of ubiquitinated proteins. The 26S proteasome plays a key role in the maintenance of protein homeostasis by removing misfolded or damaged proteins that could impair cellular functions, and by removing proteins whose functions are no longer required. Associated with the PA200 or PA28, the 20S proteasome mediates ubiquitin-independent protein degradation. This type of proteolysis is required in several pathways including spermatogenesis (20S-PA200 complex) or generation of a subset of MHC class I-presented antigenic peptides (20S-PA28 complex). Inhibits the transactivation function of HIF-1A under both normoxic and hypoxia-mimicking conditions. The interaction with EMAP2 increases the proteasome-mediated HIF-1A degradation under the hypoxic conditions. Plays a role in hepatitis C virus internal ribosome entry site-mediated translation. Mediates nuclear translocation of the androgen receptor (AR) and thereby enhances androgen-mediated transactivation. Promotes MAVS degradation and thereby negatively regulates MAVS-mediated innate immune response. In Macaca fascicularis (Crab-eating macaque), this protein is Proteasome subunit alpha type-7-like (PSMA7L).